A 1036-amino-acid polypeptide reads, in one-letter code: Lethal(2) giant larvae protein homolog 1 (1036 aa).

WD repeat units follow at residues 38-71, 78-119, 139-175, 199-233, 239-271, 289-331, 339-373, 395-473, 517-592, and 601-662; these read SALAFDPELRIMAIGTRSGAVKIYGAPGVEFTGL, VTQM…GLSF, VTVVLLVAGNTAALGTESGSIFFLDVATLALLEGQTL, SLQGHLQDPSKILIGYSRGLLVIWSQATQSVDNVF, LESLCWGRDGSSIISSHSDGSYAIWSTDTGSPP, AINK…ETLV, VIDFFTVHSTQPEDECDNPQALAVLLEEELVVLDL, TCSA…YKLS, QKVA…RMLI, and TAVT…LRQS. A Phosphoserine modification is found at Ser662. The segment covering 667–677 has biased composition (basic residues); that stretch reads RKSRVSGKKRT. Positions 667–688 are disordered; sequence RKSRVSGKKRTPAASSKLQEAN. Over residues 679–688 the composition is skewed to polar residues; it reads AASSKLQEAN. WD repeat units lie at residues 722–782, 791–843, 848–901, and 915–938; these read VRCL…KEVQ, AIAV…VSAK, LTAH…VHYS, and VFTRHGQGFYLISPSEFERFSLSA. Thr957 is subject to Phosphothreonine. Phosphoserine occurs at positions 964, 982, and 989. Residues 980–1002 are disordered; the sequence is PESCEGSPSSAHSKRADTMEPPE.

Belongs to the WD repeat L(2)GL family. As to quaternary structure, associated with nonmuscle myosin II heavy chain. Interacts with PRKCI/aPKC, PARD6B/Par-6 and PARD6A. Interacts with STX4A. Interacts with RAB10 (GDP-bound form); the interaction is direct and promotes RAB10 association with membranes and activation through competition with the Rab inhibitor GDI1. Interacts with DCAF1. Phosphorylated by PRKCI on at least one of the following Ser residues: Ser 654, Ser-658, Ser-662, Ser-669 and Ser-672. Phosphorylation is important for appropriated cell polarization.

The protein localises to the early endosome membrane. Its subcellular location is the golgi apparatus. The protein resides in the trans-Golgi network membrane. It localises to the golgi apparatus membrane. It is found in the cell projection. The protein localises to the axon. Its subcellular location is the cytoplasm. The protein resides in the cytoskeleton. Functionally, cortical cytoskeleton protein found in a complex involved in maintaining cell polarity and epithelial integrity. Involved in the regulation of mitotic spindle orientation, proliferation, differentiation and tissue organization of neuroepithelial cells. Involved in axonogenesis through RAB10 activation thereby regulating vesicular membrane trafficking toward the axonal plasma membrane. The sequence is that of Lethal(2) giant larvae protein homolog 1 (Llgl1) from Mus musculus (Mouse).